Reading from the N-terminus, the 137-residue chain is Large ribosomal subunit protein uL16 (137 aa).

It belongs to the universal ribosomal protein uL16 family. As to quaternary structure, part of the 50S ribosomal subunit.

Functionally, binds 23S rRNA and is also seen to make contacts with the A and possibly P site tRNAs. The chain is Large ribosomal subunit protein uL16 from Methylorubrum extorquens (strain CM4 / NCIMB 13688) (Methylobacterium extorquens).